A 527-amino-acid polypeptide reads, in one-letter code: Zinc finger C2HC domain-containing protein 1C (527 aa).

2 disordered regions span residues 18–105 and 145–170; these read HNKT…GQGK and VHRK…LPDS. The span at 50–61 shows a compositional bias: polar residues; it reads NSFQSKLWSNTE. Basic residues predominate over residues 71 to 85; the sequence is RPKRNVCTKARRHSC. Residues 93 to 102 show a composition bias toward low complexity; it reads QQGSGNNAQG. Residues 207–254 adopt a coiled-coil conformation; that stretch reads TQIQRLEAAGESLQKEIRRKEILLQEKLKKTEEGLRRMQKEKKQAIFQ. Disordered regions lie at residues 264–316 and 352–379; these read LPRR…LSDY and LGST…EPEL. Over residues 286–298 the composition is skewed to basic and acidic residues; that stretch reads FRSEVFSRNRGED. The segment covering 301-312 has biased composition (polar residues); the sequence is CDQAQENPSPRQ. The segment covering 358 to 374 has biased composition (low complexity); sequence ESSRSGTPGSSGSSSST. C2HC/C3H-type zinc fingers lie at residues 378–407 and 489–518; these read ELAK…MQGS and DYVQ…IKNR. Zn(2+)-binding residues include C382, C385, H397, C401, C493, C496, H508, and C512. The interval 507-527 is disordered; the sequence is RHIPKCKTIKNRPPPPRRHDS.

It belongs to the ZC2HC1 family. Zn(2+) serves as cofactor.

The polypeptide is Zinc finger C2HC domain-containing protein 1C (Zc2hc1c) (Mus musculus (Mouse)).